The chain runs to 120 residues: Large ribosomal subunit protein uL29A (120 aa).

Phosphoserine is present on residues S13 and S50.

It belongs to the universal ribosomal protein uL29 family. In terms of assembly, component of the large ribosomal subunit (LSU). Mature yeast ribosomes consist of a small (40S) and a large (60S) subunit. The 40S small subunit contains 1 molecule of ribosomal RNA (18S rRNA) and 33 different proteins (encoded by 57 genes). The large 60S subunit contains 3 rRNA molecules (25S, 5.8S and 5S rRNA) and 46 different proteins (encoded by 81 genes). uL29 is associated with the polypeptide exit tunnel.

It localises to the cytoplasm. Its function is as follows. Component of the ribosome, a large ribonucleoprotein complex responsible for the synthesis of proteins in the cell. The small ribosomal subunit (SSU) binds messenger RNAs (mRNAs) and translates the encoded message by selecting cognate aminoacyl-transfer RNA (tRNA) molecules. The large subunit (LSU) contains the ribosomal catalytic site termed the peptidyl transferase center (PTC), which catalyzes the formation of peptide bonds, thereby polymerizing the amino acids delivered by tRNAs into a polypeptide chain. The nascent polypeptides leave the ribosome through a tunnel in the LSU and interact with protein factors that function in enzymatic processing, targeting, and the membrane insertion of nascent chains at the exit of the ribosomal tunnel. This Saccharomyces cerevisiae (strain ATCC 204508 / S288c) (Baker's yeast) protein is Large ribosomal subunit protein uL29A.